Consider the following 433-residue polypeptide: tRNA-2-methylthio-N(6)-dimethylallyladenosine synthase (433 aa).

In terms of domain architecture, MTTase N-terminal spans 3-118; sequence KKLFIQTLGC…ISTAVKTPKF (116 aa). [4Fe-4S] cluster-binding residues include cysteine 12, cysteine 49, cysteine 81, cysteine 150, cysteine 154, and cysteine 157. The 234-residue stretch at 136 to 369 folds into the Radical SAM core domain; it reads RGSPYKSHIN…QSRHNEILDE (234 aa). The TRAM domain occupies 372–433; that stretch reads AAQEGKILDV…RMVLYGELAN (62 aa).

This sequence belongs to the methylthiotransferase family. MiaB subfamily. In terms of assembly, monomer. [4Fe-4S] cluster is required as a cofactor.

It localises to the cytoplasm. The catalysed reaction is N(6)-dimethylallyladenosine(37) in tRNA + (sulfur carrier)-SH + AH2 + 2 S-adenosyl-L-methionine = 2-methylsulfanyl-N(6)-dimethylallyladenosine(37) in tRNA + (sulfur carrier)-H + 5'-deoxyadenosine + L-methionine + A + S-adenosyl-L-homocysteine + 2 H(+). Catalyzes the methylthiolation of N6-(dimethylallyl)adenosine (i(6)A), leading to the formation of 2-methylthio-N6-(dimethylallyl)adenosine (ms(2)i(6)A) at position 37 in tRNAs that read codons beginning with uridine. The polypeptide is tRNA-2-methylthio-N(6)-dimethylallyladenosine synthase (Campylobacter curvus (strain 525.92)).